Here is a 277-residue protein sequence, read N- to C-terminus: Tryptophan synthase alpha chain (277 aa).

Catalysis depends on proton acceptor residues Glu59 and Asp70.

The protein belongs to the TrpA family. Tetramer of two alpha and two beta chains.

The catalysed reaction is (1S,2R)-1-C-(indol-3-yl)glycerol 3-phosphate + L-serine = D-glyceraldehyde 3-phosphate + L-tryptophan + H2O. It participates in amino-acid biosynthesis; L-tryptophan biosynthesis; L-tryptophan from chorismate: step 5/5. In terms of biological role, the alpha subunit is responsible for the aldol cleavage of indoleglycerol phosphate to indole and glyceraldehyde 3-phosphate. In Streptomyces avermitilis (strain ATCC 31267 / DSM 46492 / JCM 5070 / NBRC 14893 / NCIMB 12804 / NRRL 8165 / MA-4680), this protein is Tryptophan synthase alpha chain.